A 156-amino-acid polypeptide reads, in one-letter code: Glutamate-rich protein 2 (156 aa).

Disordered stretches follow at residues Leu29–Pro66 and Glu116–Ser156. 2 stretches are compositionally biased toward acidic residues: residues Ser39–Asp56 and Ser140–Ser156.

This Homo sapiens (Human) protein is Glutamate-rich protein 2 (ERICH2).